The sequence spans 232 residues: Large ribosomal subunit protein uL1 (232 aa).

The protein belongs to the universal ribosomal protein uL1 family. As to quaternary structure, part of the 50S ribosomal subunit.

Its function is as follows. Binds directly to 23S rRNA. The L1 stalk is quite mobile in the ribosome, and is involved in E site tRNA release. Protein L1 is also a translational repressor protein, it controls the translation of the L11 operon by binding to its mRNA. This Stenotrophomonas maltophilia (strain K279a) protein is Large ribosomal subunit protein uL1.